The chain runs to 614 residues: Signal recognition particle receptor subunit alpha homolog (614 aa).

Residues 119 to 244 (EASAKQVKAP…DRSRDSPDDV (126 aa)) are disordered. Residues 149-160 (QDDKKPVEKRVN) show a composition bias toward basic and acidic residues. Pro residues predominate over residues 164–178 (APPPSKSQPSSPPTG). Over residues 232 to 241 (ALLDRSRDSP) the composition is skewed to basic and acidic residues. 2 positions are modified to phosphoserine: serine 237 and serine 240. Tyrosine 246 is modified (phosphotyrosine). Serine 268, serine 278, and serine 279 each carry phosphoserine. Positions 268–285 (SEDEADNEDASSEGEAEE) are enriched in acidic residues. The disordered stretch occupies residues 268-290 (SEDEADNEDASSEGEAEEQVQSK). Residues 396–613 (YTIIFCGVNG…NVNAVVNSLM (218 aa)) form an NG domain region. GTP contacts are provided by residues 402 to 409 (GVNGVGKS), 497 to 501 (DTAGR), and 565 to 568 (TKFD).

The protein belongs to the GTP-binding SRP family. Heterodimer of SrpRalpha and SrpRbeta. In 8-9 hours embryos, expression is seen in a segmental pattern along embryonic ventral midline.

It localises to the endoplasmic reticulum membrane. In terms of biological role, component of the SRP (signal recognition particle) receptor. Ensures, in conjunction with the signal recognition particle, the correct targeting of the nascent secretory proteins to the endoplasmic reticulum membrane system. Forms a guanosine 5'-triphosphate (GTP)-dependent complex with the SRP subunit Srp54. SRP receptor compaction and GTPase rearrangement drive SRP-mediated cotranslational protein translocation into the ER. May have a role in axonogenesis. This is Signal recognition particle receptor subunit alpha homolog from Drosophila melanogaster (Fruit fly).